A 295-amino-acid chain; its full sequence is Protoheme IX farnesyltransferase (295 aa).

Helical transmembrane passes span 30-50, 51-71, 93-115, 119-136, 148-168, 175-195, 219-239, 244-264, and 275-295; these read LVVL…HPLI, AVIS…INMW, ISRS…IMMI, YISG…IYVY, IVIG…SVTG, LVLF…LSLL, IHIL…GLFL, LYEI…FQVF, and MFTY…LSSF.

It belongs to the UbiA prenyltransferase family. Protoheme IX farnesyltransferase subfamily.

The protein localises to the cell inner membrane. It carries out the reaction heme b + (2E,6E)-farnesyl diphosphate + H2O = Fe(II)-heme o + diphosphate. Its pathway is porphyrin-containing compound metabolism; heme O biosynthesis; heme O from protoheme: step 1/1. Functionally, converts heme B (protoheme IX) to heme O by substitution of the vinyl group on carbon 2 of heme B porphyrin ring with a hydroxyethyl farnesyl side group. The chain is Protoheme IX farnesyltransferase from Ehrlichia ruminantium (strain Welgevonden).